The following is a 100-amino-acid chain: Urease subunit gamma (100 aa).

This sequence belongs to the urease gamma subunit family. As to quaternary structure, heterotrimer of UreA (gamma), UreB (beta) and UreC (alpha) subunits. Three heterotrimers associate to form the active enzyme.

It localises to the cytoplasm. It carries out the reaction urea + 2 H2O + H(+) = hydrogencarbonate + 2 NH4(+). The protein operates within nitrogen metabolism; urea degradation; CO(2) and NH(3) from urea (urease route): step 1/1. The polypeptide is Urease subunit gamma (Cereibacter sphaeroides (strain ATCC 17029 / ATH 2.4.9) (Rhodobacter sphaeroides)).